Reading from the N-terminus, the 584-residue chain is Gag-Pro polyprotein (584 aa).

Gly2 carries the N-myristoyl glycine; by host lipid modification. The interval 95 to 116 is disordered; sequence EAPPSAPLAEDPQKPPPYPEQA. The PTAP/PSAP motif signature appears at 98 to 101; that stretch reads PSAP. The PPXY motif motif lies at 109–112; it reads PPPY. 2 CCHC-type zinc fingers span residues 349-366 and 372-389; these read QPCF…DCKQ and GPCP…DCPQ. Residues 457-535 form the Peptidase A2 domain; sequence VQALLDTGAD…NQWTILGRDA (79 aa). Asp462 serves as the catalytic For protease activity; shared with dimeric partner.

As to quaternary structure, interacts with human TSG101. This interaction is essential for budding and release of viral particles. Post-translationally, specific enzymatic cleavages by the viral protease yield mature proteins. The polyprotein is cleaved during and after budding, this process is termed maturation. The protease is autoproteolytically processed at its N- and C-termini.

The protein resides in the virion. Functionally, matrix protein p19 targets Gag, Gag-Pro and Gag-Pro-Pol polyproteins to the plasma membrane via a multipartite membrane binding signal, that includes its myristoylated N-terminus. Also mediates nuclear localization of the preintegration complex. Its function is as follows. Capsid protein p24 forms the conical core of the virus that encapsulates the genomic RNA-nucleocapsid complex. Nucleocapsid protein p15 is involved in the packaging and encapsidation of two copies of the genome. In terms of biological role, the aspartyl protease mediates proteolytic cleavages of Gag, Gag-Pro and Gag-Pro-Pol polyproteins during or shortly after the release of the virion from the plasma membrane. Cleavages take place as an ordered, step-wise cascade to yield mature proteins. This process is called maturation. Displays maximal activity during the budding process just prior to particle release from the cell. Hydrolyzes host EIF4GI in order to shut off the capped cellular mRNA translation. The resulting inhibition of cellular protein synthesis serves to ensure maximal viral gene expression and to evade host immune response. This is Gag-Pro polyprotein (gag-pro) from Homo sapiens (Human).